A 1722-amino-acid chain; its full sequence is Lymphocyte antigen 75 (1722 aa).

Residues 1–27 (MRTGWATPRRPAGLLMLLFWFFDLAEP) form the signal peptide. The Extracellular portion of the chain corresponds to 28 to 1666 (SGRAANDPFT…VVCKVPLGPD (1639 aa)). The 124-residue stretch at 33 to 156 (NDPFTIVHGN…ESLCDQPYHE (124 aa)) folds into the Ricin B-type lectin domain. Asn-135 carries N-linked (GlcNAc...) asparagine glycosylation. A Fibronectin type-II domain is found at 164–211 (SYGRPCEFPFLIDGTWHHDCILDEDHSGPWCATTLNYEYDRKWGICLK). 4 disulfide bridges follow: Cys-169/Cys-194, Cys-183/Cys-209, Cys-247/Cys-340, and Cys-317/Cys-332. Positions 225–341 (QFGSCYQFNT…CEAQLPYVCR (117 aa)) constitute a C-type lectin 1 domain. N-linked (GlcNAc...) asparagine glycosylation is found at Asn-345 and Asn-377. C-type lectin domains follow at residues 368 to 486 (NNGF…YVCK), 493 to 625 (NDAS…ICKK), 652 to 778 (ASLS…IYLR), and 818 to 931 (IEGS…FICE). 2 disulfide bridges follow: Cys-389–Cys-485 and Cys-462–Cys-477. Asn-529 carries N-linked (GlcNAc...) asparagine glycosylation. The cysteines at positions 597 and 614 are disulfide-linked. 2 cysteine pairs are disulfide-bonded: Cys-840–Cys-930 and Cys-904–Cys-922. N-linked (GlcNAc...) asparagine glycans are attached at residues Asn-843 and Asn-865. At Tyr-933 the chain carries Phosphotyrosine. N-linked (GlcNAc...) asparagine glycans are attached at residues Asn-934, Asn-1076, and Asn-1103. In terms of domain architecture, C-type lectin 6 spans 958-1091 (FQNKCFLKIK…ERHFVSLCQK (134 aa)). An intrachain disulfide couples Cys-1060 to Cys-1080. In terms of domain architecture, C-type lectin 7 spans 1110-1222 (YLNNLYKIIP…DNQPGAICYY (113 aa)). Cys-1197 and Cys-1211 form a disulfide bridge. Asn-1225, Asn-1320, and Asn-1392 each carry an N-linked (GlcNAc...) asparagine glycan. One can recognise a C-type lectin 8 domain in the interval 1251–1374 (FQNCCYNFII…VIEEAVYFHQ (124 aa)). 2 C-type lectin domains span residues 1401–1513 (YEDG…ICYK) and 1542–1661 (YKGH…VCKV). Residues Cys-1488 and Cys-1502 are joined by a disulfide bond. N-linked (GlcNAc...) asparagine glycans are attached at residues Asn-1593 and Asn-1626. Cysteines 1635 and 1650 form a disulfide. The chain crosses the membrane as a helical span at residues 1667–1691 (YTAIAIIVATLSILVLMGGLIWFLF). At 1692 to 1722 (QRHRLHLAGFSSVRYAQGVNEDEIMLPSFHD) the chain is on the cytoplasmic side. A phosphoserine mark is found at Ser-1703 and Ser-1719.

Post-translationally, N-glycosylated. As to expression, expressed in spleen, thymus, colon and peripheral blood lymphocytes. Detected in myeloid and B-lymphoid cell lines. Isoform 2 and isoform 3 are expressed in malignant Hodgkin lymphoma cells called Hodgkin and Reed-Sternberg (HRS) cells.

It localises to the membrane. Acts as an endocytic receptor to direct captured antigens from the extracellular space to a specialized antigen-processing compartment. Causes reduced proliferation of B-lymphocytes. In Homo sapiens (Human), this protein is Lymphocyte antigen 75 (LY75).